We begin with the raw amino-acid sequence, 261 residues long: 3-deoxy-manno-octulosonate cytidylyltransferase (261 aa).

This sequence belongs to the KdsB family.

Its subcellular location is the cytoplasm. The enzyme catalyses 3-deoxy-alpha-D-manno-oct-2-ulosonate + CTP = CMP-3-deoxy-beta-D-manno-octulosonate + diphosphate. It functions in the pathway nucleotide-sugar biosynthesis; CMP-3-deoxy-D-manno-octulosonate biosynthesis; CMP-3-deoxy-D-manno-octulosonate from 3-deoxy-D-manno-octulosonate and CTP: step 1/1. The protein operates within bacterial outer membrane biogenesis; lipopolysaccharide biosynthesis. Functionally, activates KDO (a required 8-carbon sugar) for incorporation into bacterial lipopolysaccharide in Gram-negative bacteria. The chain is 3-deoxy-manno-octulosonate cytidylyltransferase from Marinobacter nauticus (strain ATCC 700491 / DSM 11845 / VT8) (Marinobacter aquaeolei).